The chain runs to 267 residues: Phosphate import ATP-binding protein PstB 2 (267 aa).

The ABC transporter domain occupies 21-262; that stretch reads LATKDLHVYY…AQCQSTNDYV (242 aa). 53-60 is an ATP binding site; the sequence is GPSGCGKS.

This sequence belongs to the ABC transporter superfamily. Phosphate importer (TC 3.A.1.7) family. As to quaternary structure, the complex is composed of two ATP-binding proteins (PstB), two transmembrane proteins (PstC and PstA) and a solute-binding protein (PstS).

The protein localises to the cell membrane. The catalysed reaction is phosphate(out) + ATP + H2O = ADP + 2 phosphate(in) + H(+). Functionally, part of the ABC transporter complex PstSACB involved in phosphate import. Responsible for energy coupling to the transport system. In Streptococcus pyogenes serotype M18 (strain MGAS8232), this protein is Phosphate import ATP-binding protein PstB 2.